An 879-amino-acid chain; its full sequence is Alanine--tRNA ligase (879 aa).

Residues histidine 566, histidine 570, cysteine 668, and histidine 672 each coordinate Zn(2+).

Belongs to the class-II aminoacyl-tRNA synthetase family. Zn(2+) is required as a cofactor.

The protein localises to the cytoplasm. It catalyses the reaction tRNA(Ala) + L-alanine + ATP = L-alanyl-tRNA(Ala) + AMP + diphosphate. Functionally, catalyzes the attachment of alanine to tRNA(Ala) in a two-step reaction: alanine is first activated by ATP to form Ala-AMP and then transferred to the acceptor end of tRNA(Ala). Also edits incorrectly charged Ser-tRNA(Ala) and Gly-tRNA(Ala) via its editing domain. The chain is Alanine--tRNA ligase from Clostridium tetani (strain Massachusetts / E88).